Reading from the N-terminus, the 480-residue chain is Protein nucleotidyltransferase YdiU (480 aa).

ATP-binding residues include Gly86, Gly88, Arg89, Lys109, Asp121, Gly122, Arg172, and Arg179. The Proton acceptor role is filled by Asp248. Mg(2+) contacts are provided by Asn249 and Asp258. Asp258 lines the ATP pocket.

It belongs to the SELO family. It depends on Mg(2+) as a cofactor. Requires Mn(2+) as cofactor.

It carries out the reaction L-seryl-[protein] + ATP = 3-O-(5'-adenylyl)-L-seryl-[protein] + diphosphate. The enzyme catalyses L-threonyl-[protein] + ATP = 3-O-(5'-adenylyl)-L-threonyl-[protein] + diphosphate. It catalyses the reaction L-tyrosyl-[protein] + ATP = O-(5'-adenylyl)-L-tyrosyl-[protein] + diphosphate. The catalysed reaction is L-histidyl-[protein] + UTP = N(tele)-(5'-uridylyl)-L-histidyl-[protein] + diphosphate. It carries out the reaction L-seryl-[protein] + UTP = O-(5'-uridylyl)-L-seryl-[protein] + diphosphate. The enzyme catalyses L-tyrosyl-[protein] + UTP = O-(5'-uridylyl)-L-tyrosyl-[protein] + diphosphate. Functionally, nucleotidyltransferase involved in the post-translational modification of proteins. It can catalyze the addition of adenosine monophosphate (AMP) or uridine monophosphate (UMP) to a protein, resulting in modifications known as AMPylation and UMPylation. In Salmonella typhi, this protein is Protein nucleotidyltransferase YdiU.